A 482-amino-acid polypeptide reads, in one-letter code: MASIPPDDDAAAAAAAGAAENGYGNGKGNGNGPAPRPPPAKRPRSVISAAQIRAEFEHHEAGVARVNNGSFGCCPSSLLDAQARWQRLFIAQPDDFYFHALQPGLRRSRAAVAGLVNAGDVAEVSLVDNATTAAAIVLQHAAWSFAEGRFSRGDAVLMLHYAYGAVKKSIHAYVARAGATVVEVPLPFPVASADAIIAEFRAALDVAKAGGRKVRLAVIDHITSMPSVVIPVKELVAICREEGVDKVFIDAAHSIGQVPVDVRDIGADFYTSNLHKWFFCPPAVAFLHTRKDDPIASQLHHPVVSHEYGNGLPMESGWIGTRDYSAQLVVPESIDFVNRFEGGIEGIRSRNHEKVIEMGKMLAEAWGTFLGTPPELCGSMVMVGLPGCLGVESDDDVMRMRTMLRKDFMVEVPIYYNSRRVEAQEMAKDKNGDAVTGYVRISHQVYNVTEDYEKLRDAVNKLVADGFTSSKLRPSQKQETMA.

A compositionally biased stretch (acidic residues) spans 1 to 10 (MASIPPDDDA). The interval 1–45 (MASIPPDDDAAAAAAAGAAENGYGNGKGNGNGPAPRPPPAKRPRS) is disordered. Over residues 11-22 (AAAAAAGAAENG) the composition is skewed to low complexity. Lys-276 carries the N6-(pyridoxal phosphate)lysine modification.

It belongs to the class-V pyridoxal-phosphate-dependent aminotransferase family. It depends on pyridoxal 5'-phosphate as a cofactor.

It catalyses the reaction L-cysteine + H2O = hydrogen sulfide + pyruvate + NH4(+) + H(+). Catalyzes the production of hydrogen sulfide (H2S) from cysteine. This Oryza sativa subsp. japonica (Rice) protein is Putative L-cysteine desulfhydrase 1.